The primary structure comprises 61 residues: Large ribosomal subunit protein bL28 (61 aa).

The interval 1 to 26 is disordered; it reads MAKDYVTGKRTHFGNTRSHALNHSRR.

It belongs to the bacterial ribosomal protein bL28 family.

This is Large ribosomal subunit protein bL28 from Lactiplantibacillus plantarum (strain ATCC BAA-793 / NCIMB 8826 / WCFS1) (Lactobacillus plantarum).